The sequence spans 49 residues: Large ribosomal subunit protein bL33C (49 aa).

This sequence belongs to the bacterial ribosomal protein bL33 family.

The protein is Large ribosomal subunit protein bL33C of Lactococcus lactis subsp. cremoris (strain MG1363).